A 293-amino-acid chain; its full sequence is Ribosomal protein L11 methyltransferase (293 aa).

S-adenosyl-L-methionine is bound by residues Thr-145, Gly-166, Asp-188, and Asn-229.

This sequence belongs to the methyltransferase superfamily. PrmA family.

It is found in the cytoplasm. It carries out the reaction L-lysyl-[protein] + 3 S-adenosyl-L-methionine = N(6),N(6),N(6)-trimethyl-L-lysyl-[protein] + 3 S-adenosyl-L-homocysteine + 3 H(+). Functionally, methylates ribosomal protein L11. The chain is Ribosomal protein L11 methyltransferase from Idiomarina loihiensis (strain ATCC BAA-735 / DSM 15497 / L2-TR).